We begin with the raw amino-acid sequence, 122 residues long: uncharacterized protein (122 aa).

Transmembrane regions (helical) follow at residues 36–56 (SVRSIIVVNILVFAGILYSQF) and 72–92 (AVFLFICPCLLYFYQGIFSTD).

It localises to the membrane. This is an uncharacterized protein from Saccharomyces cerevisiae (strain ATCC 204508 / S288c) (Baker's yeast).